Here is a 367-residue protein sequence, read N- to C-terminus: Phthiodiolone/phenolphthiodiolone dimycocerosates ketoreductase (367 aa).

The protein belongs to the mer family. Phthiodiolone/phenolphthiodiolone dimycocerosates ketoreductase subfamily.

Its function is as follows. Catalyzes the reduction of the keto moiety of phthiodiolone dimycocerosates (DIM B) and glycosylated phenolphthiodiolone dimycocerosates to form the intermediate compounds phthiotriol and glycosylated phenolphthiotriol dimycocerosates during phthiocerol dimycocerosates (DIM A) and glycosylated phenolphthiocerol dimycocerosates (PGL) biosynthesis. The polypeptide is Phthiodiolone/phenolphthiodiolone dimycocerosates ketoreductase (Mycobacterium kansasii).